Here is a 194-residue protein sequence, read N- to C-terminus: Probable GTP-binding protein EngB (194 aa).

The EngB-type G domain occupies 22–194; sequence DLPEYALAGR…AWQFIKEGME (173 aa). GTP is bound by residues 30–37, 57–61, 75–78, 142–145, and 174–176; these read GRSNVGKS, GKTQT, DVPG, TKAD, and FSS. Positions 37 and 59 each coordinate Mg(2+).

The protein belongs to the TRAFAC class TrmE-Era-EngA-EngB-Septin-like GTPase superfamily. EngB GTPase family. Mg(2+) serves as cofactor.

In terms of biological role, necessary for normal cell division and for the maintenance of normal septation. This Listeria monocytogenes serotype 4b (strain CLIP80459) protein is Probable GTP-binding protein EngB.